The following is a 92-amino-acid chain: Conotoxin Mr15.2 (92 aa).

An N-terminal signal peptide occupies residues 1-20; the sequence is MSTLKMMLLILLLLLPMATF. A propeptide spanning residues 21-53 is cleaved from the precursor; sequence DSDGQAIPGGGIPSAVNSRVGGDEKSGRSLEKR. The tract at residues 30-49 is disordered; the sequence is GGIPSAVNSRVGGDEKSGRS.

This sequence belongs to the conotoxin N superfamily. Contains 4 disulfide bonds. As to expression, expressed by the venom duct.

Its subcellular location is the secreted. This chain is Conotoxin Mr15.2, found in Conus marmoreus (Marble cone).